The following is a 371-amino-acid chain: Glycerol-3-phosphate dehydrogenase [NAD(+)] 2 (371 aa).

Residues 18 to 23, F50, and F106 each bind NAD(+); that span reads GSGNWG. K129 contributes to the substrate binding site. A162 is a binding site for NAD(+). K222 (proton acceptor) is an active-site residue. NAD(+) contacts are provided by R294 and Q323. Substrate is bound at residue 294 to 295; it reads RN.

This sequence belongs to the NAD-dependent glycerol-3-phosphate dehydrogenase family. As to quaternary structure, interacts with human CFH/complement factor H; the interaction is direct and enables the pathogen to evade the host innate immune system. Interacts with human CFHR1/complement factor H-related protein 1; the interaction is direct. Interacts with human PLG/plasminogen; the interaction is direct and provides active plasmin on the surface of fungal cells.

It localises to the secreted. Its subcellular location is the cell wall. The protein localises to the cytoplasm. It is found in the peroxisome. It carries out the reaction sn-glycerol 3-phosphate + NAD(+) = dihydroxyacetone phosphate + NADH + H(+). Functionally, may catalyze the production and accumulation of glycerol during hyperosmotic stress conditions. Glycerol acts as a osmoregulator that prevents loss of water and turgor of the cells. Mediates evasion of the host innate immune system by binding inhibitory components of the host alternative complement system, in a manner dependent on estrogen-induced inhibition of EBP1. The sequence is that of Glycerol-3-phosphate dehydrogenase [NAD(+)] 2 from Candida albicans (strain SC5314 / ATCC MYA-2876) (Yeast).